A 231-amino-acid polypeptide reads, in one-letter code: Chromosome partition protein MukE (231 aa).

A disordered region spans residues 204–231 (TPEPSQQSLLENPTAEYDEEQTEWEDEA). The span at 219 to 231 (EYDEEQTEWEDEA) shows a compositional bias: acidic residues.

This sequence belongs to the MukE family. As to quaternary structure, interacts, and probably forms a ternary complex, with MukF and MukB. The complex formation is stimulated by calcium or magnesium.

Its subcellular location is the cytoplasm. The protein localises to the nucleoid. In terms of biological role, involved in chromosome condensation, segregation and cell cycle progression. May participate in facilitating chromosome segregation by condensation DNA from both sides of a centrally located replisome during cell division. Probably acts via its interaction with MukB and MukF. This chain is Chromosome partition protein MukE, found in Vibrio cholerae serotype O1 (strain ATCC 39315 / El Tor Inaba N16961).